Reading from the N-terminus, the 162-residue chain is uncharacterized protein (162 aa).

It to R.meliloti R02472.

This is an uncharacterized protein from Escherichia coli (strain K12).